Consider the following 99-residue polypeptide: uncharacterized protein (99 aa).

This is an uncharacterized protein from Bacillus subtilis (strain 168).